The following is a 286-amino-acid chain: Phosphate import ATP-binding protein PstB (286 aa).

Residues 40-281 (VVAKDFSIFY…PRDRMTEDYI (242 aa)) form the ABC transporter domain. ATP is bound at residue 72 to 79 (GPSGCGKS).

This sequence belongs to the ABC transporter superfamily. Phosphate importer (TC 3.A.1.7) family. The complex is composed of two ATP-binding proteins (PstB), two transmembrane proteins (PstC and PstA) and a solute-binding protein (PstS).

It localises to the cell inner membrane. The enzyme catalyses phosphate(out) + ATP + H2O = ADP + 2 phosphate(in) + H(+). Part of the ABC transporter complex PstSACB involved in phosphate import. Responsible for energy coupling to the transport system. This is Phosphate import ATP-binding protein PstB from Chlorobium luteolum (strain DSM 273 / BCRC 81028 / 2530) (Pelodictyon luteolum).